A 271-amino-acid chain; its full sequence is Aquaporin-1 (271 aa).

At 1 to 11 (MASEFKKKIFW) the chain is on the cytoplasmic side. Residues 12–29 (RAVVAEFLAMTLFIFISI) form a helical membrane-spanning segment. The Extracellular segment spans residues 30-48 (GSALGFQYPVRNNQTSGAA). Asn-42 carries N-linked (GlcNAc...) asparagine glycosylation. The chain crosses the membrane as a helical span at residues 49–67 (QDNVKVSLAFGLSIATLAQ). Topologically, residues 68-70 (SVG) are cytoplasmic. The stretch at 71 to 84 (HISGAHLNPAVTLG) is an intramembrane region. The NPA 1 motif lies at 78 to 80 (NPA). Topologically, residues 85–92 (LLLSCQIS) are cytoplasmic. Residues 93 to 111 (VLRAVMYIIAQCVGAIVAT) form a helical membrane-spanning segment. Residues 112–135 (AILSGITSSLPGNSLGLNSLAPGV) lie on the Extracellular side of the membrane. Residues 136–155 (DSGQGLGIEIIGTLQLVLCV) traverse the membrane as a helical segment. Residues 156–165 (LATTDRRRRD) are Cytoplasmic-facing. The chain crosses the membrane as a helical span at residues 166-183 (LGGSAPLAIGFSVALGHL). Topologically, residues 184 to 188 (LAIDY) are extracellular. Residues 189–201 (TGCGINPARSFGS) lie within the membrane without spanning it. An NPA 2 motif is present at residues 194 to 196 (NPA). Topologically, residues 202–208 (AVITHNF) are extracellular. The chain crosses the membrane as a helical span at residues 209-226 (QDHWVFWVGPFIGGALAV). Residues 227–271 (LIYDFILAPRSSDLTDRVKVWTSGQVEEYDLDGDDINSRVEMKPK) are Cytoplasmic-facing. Position 249 is a phosphoserine (Ser-249). Tyr-255 bears the Phosphotyrosine mark. The residue at position 264 (Ser-264) is a Phosphoserine.

This sequence belongs to the MIP/aquaporin (TC 1.A.8) family. Homotetramer; each monomer provides an independent water pore. Component of the ankyrin-1 complex in the erythrocyte, composed of ANK1, RHCE, RHAG, SLC4A1, EPB42, GYPA, GYPB and AQP1. Interacts with EPHB2; involved in endolymph production in the inner ear. Identified in a complex with STOM. Interacts (via the N-terminal) with ANK1 (via ANK 1-5 repeats). Interacts (via the C-terminal) with EPB42.

It localises to the cell membrane. The catalysed reaction is H2O(in) = H2O(out). The enzyme catalyses nitric oxide(out) = nitric oxide(in). It carries out the reaction CO2(out) = CO2(in). It catalyses the reaction glycerol(in) = glycerol(out). The catalysed reaction is H2O2(out) = H2O2(in). The enzyme catalyses K(+)(in) = K(+)(out). It carries out the reaction Na(+)(in) = Na(+)(out). In terms of biological role, forms a water channel that facilitates the transport of water across cell membranes, playing a crucial role in water homeostasis in various tissues. Could also be permeable to small solutes including hydrogen peroxide, glycerol and gases such as amonnia (NH3), nitric oxide (NO) and carbon dioxide (CO2). Recruited to the ankyrin-1 complex, a multiprotein complex of the erythrocyte membrane, it could be part of a CO2 metabolon, linking facilitated diffusion of CO2 across the membrane, anion exchange of Cl(-)/HCO3(-) and interconversion of dissolved CO2 and carbonic acid in the cytosol. In vitro, it shows non-selective gated cation channel activity and may be permeable to cations like K(+) and Na(+) in vivo. The polypeptide is Aquaporin-1 (Sus scrofa (Pig)).